The following is a 58-amino-acid chain: Histatherin (58 aa).

The first 19 residues, 1 to 19 (MKIFIFIFIMALILAMIRA), serve as a signal peptide directing secretion.

It belongs to the histatin/statherin family. Expressed in mammary glands.

Its subcellular location is the secreted. This chain is Histatherin, found in Bos taurus (Bovine).